We begin with the raw amino-acid sequence, 60 residues long: Large ribosomal subunit protein bL33 (60 aa).

It belongs to the bacterial ribosomal protein bL33 family.

This is Large ribosomal subunit protein bL33 from Flavobacterium johnsoniae (strain ATCC 17061 / DSM 2064 / JCM 8514 / BCRC 14874 / CCUG 350202 / NBRC 14942 / NCIMB 11054 / UW101) (Cytophaga johnsonae).